Here is a 706-residue protein sequence, read N- to C-terminus: Transferrin-binding protein B (706 aa).

An N-terminal signal peptide occupies residues 1–20 (MKHIPLTTLCVAISAVLLTA). Cysteine 21 carries the N-palmitoyl cysteine lipid modification. Cysteine 21 is lipidated: S-diacylglycerol cysteine. 2 disordered regions span residues 26–92 (GSNP…KEQV) and 384–412 (GSAI…LEGG). Residues 42 to 51 (GNTGNTGNAG) show a composition bias toward gly residues. Residues 389-410 (SDKEKDSETKHPFTSDAKDRLE) are compositionally biased toward basic and acidic residues.

The protein belongs to the TbpB family.

It localises to the cell outer membrane. The protein localises to the cell surface. In terms of biological role, moraxella acquires iron by extracting it from serum transferrin (TF) in its human host. Acts as a transferrin receptor and is required for transferrin utilization. In Moraxella catarrhalis (Branhamella catarrhalis), this protein is Transferrin-binding protein B.